The sequence spans 671 residues: Probable potassium transport system protein Kup 2 (671 aa).

The next 12 membrane-spanning stretches (helical) occupy residues Gly18–Met38, Val60–Leu80, Trp103–Pro123, Ala146–Ala166, Phe173–Phe193, Ala218–Ser238, Trp252–Ala272, Met292–Ile312, Leu343–Phe363, Tyr373–Ile393, Ile402–Val422, and Phe424–Ile444.

It belongs to the HAK/KUP transporter (TC 2.A.72) family.

It localises to the cell membrane. The enzyme catalyses K(+)(in) + H(+)(in) = K(+)(out) + H(+)(out). Functionally, transport of potassium into the cell. Likely operates as a K(+):H(+) symporter. This is Probable potassium transport system protein Kup 2 from Lactococcus lactis subsp. lactis (strain IL1403) (Streptococcus lactis).